The chain runs to 137 residues: Peptidyl-tRNA hydrolase ArfB (137 aa).

The interval glutamate 102–phenylalanine 137 is disordered.

This sequence belongs to the prokaryotic/mitochondrial release factor family. As to quaternary structure, associated with 70S ribosomes and polysomes.

The protein resides in the cytoplasm. The catalysed reaction is an N-acyl-L-alpha-aminoacyl-tRNA + H2O = an N-acyl-L-amino acid + a tRNA + H(+). Functionally, rescues stalled ribosomes. Can hydrolyze peptidyl-tRNA on ribosomes stalled by both non-stop mRNAs and mRNAs that contain rare codon clusters. This Pseudomonas putida (Arthrobacter siderocapsulatus) protein is Peptidyl-tRNA hydrolase ArfB (arfB).